Consider the following 279-residue polypeptide: MAMAAASWASSSSFTRFLRPLLSRNSSPSPISYSLHRYKSANCLFFSASSNKPPKLAVYAQARRVLSSKTKGDEIATPADLSFVVPLKIVEYPDPILRAKNKRIDNFDANLKKLVDEMFDIMYKTDGIGLSAPQVGMNVQLMVFNAAGERGEGEEIVLVNPRVSRYSRRIIPYEEGCLSFPMIHGDVKRPESVKVDAQDINGTRFEISLSALPARVFQHEFDHLQGVLFFDKMTDEVLDTIREKLVALEKKYEDRTGLPTPESINTRKIKKAAVGFGKS.

Positions 177 and 219 each coordinate Fe cation. Residue glutamate 220 is part of the active site. Histidine 223 provides a ligand contact to Fe cation.

Belongs to the polypeptide deformylase family. Fe(2+) is required as a cofactor.

It is found in the plastid. It localises to the chloroplast. It carries out the reaction N-terminal N-formyl-L-methionyl-[peptide] + H2O = N-terminal L-methionyl-[peptide] + formate. In terms of biological role, removes the formyl group from the N-terminal Met of newly synthesized proteins. In Solanum lycopersicum (Tomato), this protein is Peptide deformylase 1B, chloroplastic (PDF1B).